The sequence spans 737 residues: LIMR family protein R05D3.2 (737 aa).

Positions 280 to 293 (ADIEEENSEQSEDV) are enriched in acidic residues. The interval 280 to 416 (ADIEEENSEQ…PKKPKNPNFD (137 aa)) is disordered. Residues 303 to 318 (ETIHQVDRSDTPHLED) are compositionally biased toward basic and acidic residues.

The protein belongs to the LIMR family.

This chain is LIMR family protein R05D3.2, found in Caenorhabditis elegans.